Consider the following 240-residue polypeptide: Urease accessory protein UreF (240 aa).

Belongs to the UreF family. In terms of assembly, ureD, UreF and UreG form a complex that acts as a GTP-hydrolysis-dependent molecular chaperone, activating the urease apoprotein by helping to assemble the nickel containing metallocenter of UreC. The UreE protein probably delivers the nickel.

The protein localises to the cytoplasm. Its function is as follows. Required for maturation of urease via the functional incorporation of the urease nickel metallocenter. The chain is Urease accessory protein UreF from Rhodopseudomonas palustris (strain TIE-1).